Consider the following 75-residue polypeptide: UPF0352 protein VV1_3121 (75 aa).

The protein belongs to the UPF0352 family.

In Vibrio vulnificus (strain CMCP6), this protein is UPF0352 protein VV1_3121.